The chain runs to 492 residues: Phosphatidylglycerol--prolipoprotein diacylglyceryl transferase (492 aa).

The next 9 helical transmembrane spans lie at 40–60 (IFGI…YVGW), 72–92 (AIRQ…VVVP), 106–126 (VAVR…VGLA), 133–153 (AGLG…GGLL), 184–204 (QGGL…LIAL), 214–234 (IGDV…LGCL), 361–381 (VWGT…VLLI), 409–429 (GVLM…LEWI), and 441–461 (LSIS…TLFI). Arginine 230 serves as a coordination point for a 1,2-diacyl-sn-glycero-3-phospho-(1'-sn-glycerol).

Belongs to the Lgt family.

It is found in the cell inner membrane. It catalyses the reaction L-cysteinyl-[prolipoprotein] + a 1,2-diacyl-sn-glycero-3-phospho-(1'-sn-glycerol) = an S-1,2-diacyl-sn-glyceryl-L-cysteinyl-[prolipoprotein] + sn-glycerol 1-phosphate + H(+). It functions in the pathway protein modification; lipoprotein biosynthesis (diacylglyceryl transfer). In terms of biological role, catalyzes the transfer of the diacylglyceryl group from phosphatidylglycerol to the sulfhydryl group of the N-terminal cysteine of a prolipoprotein, the first step in the formation of mature lipoproteins. The sequence is that of Phosphatidylglycerol--prolipoprotein diacylglyceryl transferase from Rhodopirellula baltica (strain DSM 10527 / NCIMB 13988 / SH1).